The sequence spans 364 residues: DNA replication and repair protein RecF (364 aa).

Gly30–Thr37 is an ATP binding site.

It belongs to the RecF family.

The protein resides in the cytoplasm. Functionally, the RecF protein is involved in DNA metabolism; it is required for DNA replication and normal SOS inducibility. RecF binds preferentially to single-stranded, linear DNA. It also seems to bind ATP. This Pseudoalteromonas translucida (strain TAC 125) protein is DNA replication and repair protein RecF.